A 393-amino-acid polypeptide reads, in one-letter code: Methylthioribose kinase (393 aa).

ATP is bound by residues N38, K53, and 107 to 109 (EDL). D225 contacts substrate. 242–244 (DPE) provides a ligand contact to ATP. A substrate-binding site is contributed by R332.

It belongs to the methylthioribose kinase family. In terms of assembly, homodimer.

It carries out the reaction 5-(methylsulfanyl)-D-ribose + ATP = 5-(methylsulfanyl)-alpha-D-ribose 1-phosphate + ADP + H(+). It participates in amino-acid biosynthesis; L-methionine biosynthesis via salvage pathway; S-methyl-5-thio-alpha-D-ribose 1-phosphate from S-methyl-5'-thioadenosine (hydrolase route): step 2/2. Catalyzes the phosphorylation of methylthioribose into methylthioribose-1-phosphate. The polypeptide is Methylthioribose kinase (Bacillus cereus (strain AH820)).